The following is a 1368-amino-acid chain: DNA-directed RNA polymerase subunit beta (1368 aa).

This sequence belongs to the RNA polymerase beta chain family. The RNAP catalytic core consists of 2 alpha, 1 beta, 1 beta' and 1 omega subunit. When a sigma factor is associated with the core the holoenzyme is formed, which can initiate transcription.

The catalysed reaction is RNA(n) + a ribonucleoside 5'-triphosphate = RNA(n+1) + diphosphate. Its function is as follows. DNA-dependent RNA polymerase catalyzes the transcription of DNA into RNA using the four ribonucleoside triphosphates as substrates. The protein is DNA-directed RNA polymerase subunit beta of Legionella pneumophila (strain Lens).